Consider the following 200-residue polypeptide: Phosphatidylethanolamine N-methyltransferase B (200 aa).

Topologically, residues 1-8 (MEKGLSSD) are lumenal. Residues 9-29 (LIIAFVAIVLHVVNYNVTAQF) constitute an intramembrane region (helical). Over 30 to 39 (EYKTRYFTKL) the chain is Lumenal. A helical membrane pass occupies residues 40-58 (IGRNAIYYYAVFLIISALI). Residues 59 to 86 (RDHFINVAVLSDKDSIILFPTEIANMIG) are Cytoplasmic-facing. A helical membrane pass occupies residues 87–107 (DSCFIFGILLNIWTLKALGIK). 91 to 93 (IFG) provides a ligand contact to S-adenosyl-L-methionine. At 108–150 (GMYNGDSFGHIMDSPVTGGPYQFFSDPQYVGTTIAALGVAIRN) the chain is on the lumenal side. Residues 151–171 (QSIYGFLCTILVGVVFYISAT) traverse the membrane as a helical segment. At 172–200 (FVETPHLKNIYSNRSYSKINFKNLKSLKN) the chain is on the cytoplasmic side. 174 to 175 (ET) contacts S-adenosyl-L-methionine.

It belongs to the class VI-like SAM-binding methyltransferase superfamily. PEMT/PEM2 methyltransferase family.

It localises to the endoplasmic reticulum membrane. The protein resides in the mitochondrion membrane. It catalyses the reaction a 1,2-diacyl-sn-glycero-3-phospho-N-methylethanolamine + S-adenosyl-L-methionine = a 1,2-diacyl-sn-glycero-3-phospho-N,N-dimethylethanolamine + S-adenosyl-L-homocysteine + H(+). The enzyme catalyses a 1,2-diacyl-sn-glycero-3-phospho-N,N-dimethylethanolamine + S-adenosyl-L-methionine = a 1,2-diacyl-sn-glycero-3-phosphocholine + S-adenosyl-L-homocysteine + H(+). The catalysed reaction is a 1,2-diacyl-sn-glycero-3-phosphoethanolamine + S-adenosyl-L-methionine = a 1,2-diacyl-sn-glycero-3-phospho-N-methylethanolamine + S-adenosyl-L-homocysteine + H(+). It participates in phospholipid metabolism; phosphatidylcholine biosynthesis. Its function is as follows. Catalyzes the three sequential steps of the methylation pathway of phosphatidylcholine biosynthesis, the SAM-dependent methylation of phosphatidylethanolamine (PE) to phosphatidylmonomethylethanolamine (PMME), PMME to phosphatidyldimethylethanolamine (PDME), and PDME to phosphatidylcholine (PC). This Dictyostelium discoideum (Social amoeba) protein is Phosphatidylethanolamine N-methyltransferase B (pemtB).